The following is a 145-amino-acid chain: D-aminoacyl-tRNA deacylase (145 aa).

The short motif at 137 to 138 (GP) is the Gly-cisPro motif, important for rejection of L-amino acids element.

The protein belongs to the DTD family. As to quaternary structure, homodimer.

It localises to the cytoplasm. The enzyme catalyses glycyl-tRNA(Ala) + H2O = tRNA(Ala) + glycine + H(+). It catalyses the reaction a D-aminoacyl-tRNA + H2O = a tRNA + a D-alpha-amino acid + H(+). Functionally, an aminoacyl-tRNA editing enzyme that deacylates mischarged D-aminoacyl-tRNAs. Also deacylates mischarged glycyl-tRNA(Ala), protecting cells against glycine mischarging by AlaRS. Acts via tRNA-based rather than protein-based catalysis; rejects L-amino acids rather than detecting D-amino acids in the active site. By recycling D-aminoacyl-tRNA to D-amino acids and free tRNA molecules, this enzyme counteracts the toxicity associated with the formation of D-aminoacyl-tRNA entities in vivo and helps enforce protein L-homochirality. The protein is D-aminoacyl-tRNA deacylase of Legionella pneumophila (strain Lens).